We begin with the raw amino-acid sequence, 49 residues long: Small ribosomal subunit protein uS19c (49 aa).

This sequence belongs to the universal ribosomal protein uS19 family.

The protein localises to the plastid. Its subcellular location is the chloroplast. Its function is as follows. Protein S19 forms a complex with S13 that binds strongly to the 16S ribosomal RNA. The sequence is that of Small ribosomal subunit protein uS19c (rps19) from Sinapis alba (White mustard).